Reading from the N-terminus, the 442-residue chain is CAAX prenyl protease 1 homolog (442 aa).

At 1–62 the chain is on the lumenal side; the sequence is MDASCLFKAL…KARDYKIDNH (62 aa). The chain crosses the membrane as a helical span at residues 63–83; sequence LFGFFHSWFNQLLLTAQLIGG. A topological domain (cytoplasmic) is located at residue Tyr84. Residues 85-105 traverse the membrane as a helical segment; that stretch reads YPFLWYATASYPLHVAVFLSI. Residues 106–146 are Lumenal-facing; the sequence is NSIIETIIDLPWDLYSTFIIEDAHGFNKQTIGFYFVDKIKK. The helical transmembrane segment at 147-167 threads the bilayer; it reads MLVGFALTMPIVYGIEWIIVN. The Cytoplasmic segment spans residues 168 to 170; the sequence is GGP. A helical membrane pass occupies residues 171 to 191; the sequence is YFFVYIWLFVSVVVLLLMTIY. At 192–311 the chain is on the lumenal side; sequence PTFIAPLFDK…ELGHWALWHT (120 aa). Zn(2+) is bound at residue His301. The active site involves Glu302. His305 lines the Zn(2+) pocket. Residues 312–332 traverse the membrane as a helical segment; that stretch reads LINLVITEVNLFFSFAVFGYF. Topologically, residues 333 to 349 are cytoplasmic; it reads YKWEALYQGFGYHDTPP. Residues 350 to 370 form a helical membrane-spanning segment; sequence VIGMMLIFQFVLALYNQLASI. The Lumenal segment spans residues 371 to 442; the sequence is GMVIHSRSAE…AVRAFQAKNK (72 aa). Residue Glu380 participates in Zn(2+) binding. Asp384 acts as the Proton donor in catalysis.

The protein belongs to the peptidase M48A family. Zn(2+) serves as cofactor.

It localises to the endoplasmic reticulum membrane. The protein localises to the membrane. It catalyses the reaction Hydrolyzes the peptide bond -P2-(S-farnesyl or geranylgeranyl)C-P1'-P2'-P3'-COOH where P1' and P2' are amino acids with aliphatic side chains and P3' is any C-terminal residue.. Functionally, proteolytically removes the C-terminal three residues of farnesylated proteins. In Caenorhabditis elegans, this protein is CAAX prenyl protease 1 homolog.